A 282-amino-acid chain; its full sequence is Bifunctional protein FolD (282 aa).

NADP(+)-binding positions include 162–164 (GRS), Ser187, and Val228.

It belongs to the tetrahydrofolate dehydrogenase/cyclohydrolase family. In terms of assembly, homodimer.

The enzyme catalyses (6R)-5,10-methylene-5,6,7,8-tetrahydrofolate + NADP(+) = (6R)-5,10-methenyltetrahydrofolate + NADPH. The catalysed reaction is (6R)-5,10-methenyltetrahydrofolate + H2O = (6R)-10-formyltetrahydrofolate + H(+). Its pathway is one-carbon metabolism; tetrahydrofolate interconversion. Catalyzes the oxidation of 5,10-methylenetetrahydrofolate to 5,10-methenyltetrahydrofolate and then the hydrolysis of 5,10-methenyltetrahydrofolate to 10-formyltetrahydrofolate. The sequence is that of Bifunctional protein FolD from Thermus thermophilus (strain ATCC BAA-163 / DSM 7039 / HB27).